The primary structure comprises 256 residues: MIVCIDIGNSHIFGGVFVGDQIKHNFRYPSTTPCTSDTLGIFLLSFFERKKLDIEDIEAVVLSSVVLHLEYSVNSACKKYLGITPLELKPGVKTGLKLDIKNPLDLGADRVANSVAAISLFPSRNIIVVDFGTATTICAISENKTYIGGAILPGINLSMESLSQKTAKLSNVTISHPSSALGKTTISQIQSGLIYGQLGAIKEIINRISQENFIDKPPILIATGGYAHIFEKEQYFDVIISDLLLHGLRIIWQMNK.

Position 6–13 (aspartate 6–phenylalanine 13) interacts with ATP. Glycine 107–arginine 110 is a binding site for substrate. Aspartate 109 functions as the Proton acceptor in the catalytic mechanism. K(+) is bound at residue aspartate 130. Threonine 133 provides a ligand contact to ATP. A substrate-binding site is contributed by threonine 185.

This sequence belongs to the type III pantothenate kinase family. In terms of assembly, homodimer. NH4(+) serves as cofactor. The cofactor is K(+).

It is found in the cytoplasm. It carries out the reaction (R)-pantothenate + ATP = (R)-4'-phosphopantothenate + ADP + H(+). The protein operates within cofactor biosynthesis; coenzyme A biosynthesis; CoA from (R)-pantothenate: step 1/5. Functionally, catalyzes the phosphorylation of pantothenate (Pan), the first step in CoA biosynthesis. This Francisella tularensis subsp. holarctica (strain LVS) protein is Type III pantothenate kinase 1.